The following is a 309-amino-acid chain: Malate dehydrogenase (309 aa).

Residues 9–14 (GAGFVG) and D33 contribute to the NAD(+) site. Substrate is bound by residues R82 and R88. Residues N95 and 118 to 120 (VNN) each bind NAD(+). N120 and R151 together coordinate substrate. Catalysis depends on H175, which acts as the Proton acceptor.

This sequence belongs to the LDH/MDH superfamily. MDH type 3 family.

It carries out the reaction (S)-malate + NAD(+) = oxaloacetate + NADH + H(+). Catalyzes the reversible oxidation of malate to oxaloacetate. This is Malate dehydrogenase from Roseiflexus sp. (strain RS-1).